The following is a 712-amino-acid chain: Polyribonucleotide nucleotidyltransferase (712 aa).

Positions 487 and 493 each coordinate Mg(2+). Residues 554–613 (PKIITMTINPDKIRDVIGPSGKQINKIIEETGVKIDIEQDGTVFISSINQEMNDKAKKII) enclose the KH domain. Residues 623–691 (GEIYEGKVKR…KQGRVNLSRK (69 aa)) enclose the S1 motif domain.

Belongs to the polyribonucleotide nucleotidyltransferase family. Mg(2+) serves as cofactor.

It localises to the cytoplasm. The catalysed reaction is RNA(n+1) + phosphate = RNA(n) + a ribonucleoside 5'-diphosphate. Involved in mRNA degradation. Catalyzes the phosphorolysis of single-stranded polyribonucleotides processively in the 3'- to 5'-direction. The polypeptide is Polyribonucleotide nucleotidyltransferase (Bacillus cereus (strain AH187)).